The chain runs to 466 residues: Histidine--tRNA ligase (466 aa).

This sequence belongs to the class-II aminoacyl-tRNA synthetase family. As to quaternary structure, homodimer.

It localises to the cytoplasm. The catalysed reaction is tRNA(His) + L-histidine + ATP = L-histidyl-tRNA(His) + AMP + diphosphate + H(+). The protein is Histidine--tRNA ligase of Xylella fastidiosa (strain M12).